The primary structure comprises 244 residues: Ribonuclease 3 (244 aa).

The RNase III domain occupies 7–134 (FEEVEKTLNI…IIAAIYIDSG (128 aa)). Glu47 is a Mg(2+) binding site. Asp51 is an active-site residue. Mg(2+) contacts are provided by Asn120 and Glu123. Glu123 is an active-site residue. The 70-residue stretch at 161–230 (DYKTNLQEIV…AQDALKKLKS (70 aa)) folds into the DRBM domain.

Belongs to the ribonuclease III family. In terms of assembly, homodimer. Requires Mg(2+) as cofactor.

It localises to the cytoplasm. It carries out the reaction Endonucleolytic cleavage to 5'-phosphomonoester.. Functionally, digests double-stranded RNA. Involved in the processing of primary rRNA transcript to yield the immediate precursors to the large and small rRNAs (23S and 16S). Processes some mRNAs, and tRNAs when they are encoded in the rRNA operon. Processes pre-crRNA and tracrRNA of type II CRISPR loci if present in the organism. The polypeptide is Ribonuclease 3 (Clostridium kluyveri (strain NBRC 12016)).